The sequence spans 647 residues: Meiotically up-regulated protein C8C9.04 (647 aa).

2 disordered regions span residues 1-241 and 387-647; these read MTTN…ELKP and RAQQ…KLFH. A compositionally biased stretch (polar residues) spans 29 to 46; sequence KSTNAVEQNNNSSQASVT. Basic residues predominate over residues 49 to 67; sequence NKKKAAKRAKKKAAKKKKQ. A compositionally biased stretch (polar residues) spans 92 to 103; it reads TILQEPGFTQTI. A compositionally biased stretch (low complexity) spans 134-145; the sequence is PSASTSTAVPTT. The segment covering 146–155 has biased composition (polar residues); sequence EARNTSITEP. Positions 156-177 are enriched in low complexity; the sequence is ANSPSSSSSSASTKSTATTQSA. Phosphoserine occurs at positions 162 and 165. Thr-168 bears the Phosphothreonine mark. The span at 193-215 shows a compositional bias: polar residues; the sequence is QLGNSPASITSKPATTSAAQPSS. 2 positions are modified to phosphoserine: Ser-197 and Ser-200. Positions 232–241 are enriched in basic and acidic residues; sequence AEKEIPELKP. Polar residues-rich tracts occupy residues 390 to 406, 413 to 432, and 488 to 508; these read QPEQ…TETV, VSST…TESE, and PSST…AQSS. Ser-396 is modified (phosphoserine). Ser-489 and Ser-490 each carry phosphoserine. A Phosphothreonine modification is found at Thr-491. Residues Ser-515, Ser-519, and Ser-523 each carry the phosphoserine modification. A compositionally biased stretch (low complexity) spans 518–530; the sequence is ASAPSSPGTTSAA. The span at 561 to 589 shows a compositional bias: polar residues; sequence GSATTIPSPGSATTKPTPGSATTKPTPVS. Low complexity predominate over residues 596 to 613; it reads AGTTKPAPAAGATATAEN. Over residues 633-647 the composition is skewed to basic residues; it reads SWFKRMKKSFGKLFH.

Has a role in meiosis and sporulation. In Schizosaccharomyces pombe (strain 972 / ATCC 24843) (Fission yeast), this protein is Meiotically up-regulated protein C8C9.04.